A 406-amino-acid polypeptide reads, in one-letter code: Aminomethyltransferase, mitochondrial (406 aa).

The transit peptide at 1-29 (MRGGLWQLGQSITRRLAQADKKTIGRRCF) directs the protein to the mitochondrion. Residues glutamate 234, arginine 265, and tyrosine 403 each contribute to the substrate site.

The protein belongs to the GcvT family. As to quaternary structure, the glycine cleavage system is composed of four proteins: P, T, L and H.

The protein resides in the mitochondrion. It carries out the reaction N(6)-[(R)-S(8)-aminomethyldihydrolipoyl]-L-lysyl-[protein] + (6S)-5,6,7,8-tetrahydrofolate = N(6)-[(R)-dihydrolipoyl]-L-lysyl-[protein] + (6R)-5,10-methylene-5,6,7,8-tetrahydrofolate + NH4(+). The glycine cleavage system catalyzes the degradation of glycine. This is Aminomethyltransferase, mitochondrial (GDCST) from Solanum tuberosum (Potato).